Here is an 82-residue protein sequence, read N- to C-terminus: Escargot/snail protein homolog (82 aa).

4 consecutive C2H2-type zinc fingers follow at residues 1–5 (HQQFH), 18–40 (FSCK…IRTH), 44–66 (CKCP…IRTH), and 72–82 (FSCQHCQSAFV).

Belongs to the snail C2H2-type zinc-finger protein family.

It localises to the nucleus. In Calliphora vicina (Blue blowfly), this protein is Escargot/snail protein homolog.